A 505-amino-acid polypeptide reads, in one-letter code: N-succinylglutamate 5-semialdehyde dehydrogenase (505 aa).

Residue G234–G239 participates in NAD(+) binding. Catalysis depends on residues E257 and C291.

It belongs to the aldehyde dehydrogenase family. AstD subfamily.

The catalysed reaction is N-succinyl-L-glutamate 5-semialdehyde + NAD(+) + H2O = N-succinyl-L-glutamate + NADH + 2 H(+). The protein operates within amino-acid degradation; L-arginine degradation via AST pathway; L-glutamate and succinate from L-arginine: step 4/5. Functionally, catalyzes the NAD-dependent reduction of succinylglutamate semialdehyde into succinylglutamate. In Yersinia pestis (strain Pestoides F), this protein is N-succinylglutamate 5-semialdehyde dehydrogenase.